A 576-amino-acid chain; its full sequence is Arginine--tRNA ligase (576 aa).

A 'HIGH' region motif is present at residues 132 to 142 (ANPTGPMHIGH).

It belongs to the class-I aminoacyl-tRNA synthetase family. In terms of assembly, monomer.

The protein localises to the cytoplasm. It catalyses the reaction tRNA(Arg) + L-arginine + ATP = L-arginyl-tRNA(Arg) + AMP + diphosphate. This Ehrlichia ruminantium (strain Welgevonden) protein is Arginine--tRNA ligase.